Reading from the N-terminus, the 378-residue chain is Putative zinc finger protein 302L (378 aa).

The C2H2-type; degenerate zinc finger occupies 3-25 (IVCEFCDKSFDSKSKVNAHQRTK).

This sequence belongs to the IIV-6 302L family.

This chain is Putative zinc finger protein 302L, found in Invertebrate iridescent virus 6 (IIV-6).